The sequence spans 121 residues: Probable K(+)/H(+) antiporter subunit G (121 aa).

Helical transmembrane passes span 10-32 (WAALLVCGLMLVGAATTLIGSLG), 45-67 (APTIATSGGTILLCLASILCFAV), and 72-94 (WVFHEVLIIFFVTVTTPVTLMLL).

This sequence belongs to the CPA3 antiporters (TC 2.A.63) subunit G family. In terms of assembly, may form a hetero-oligomeric complex that consists of six subunits: PhaAB, PhaC, PhaD, PhaE, PhaF and PhaG.

The protein resides in the cell membrane. Its function is as follows. Part of a K(+) efflux system which is required for the adaptation of R.meliloti to alkaline pH as well as for the infection process during symbiotic nodule development. This chain is Probable K(+)/H(+) antiporter subunit G (phaG), found in Rhizobium meliloti (strain 1021) (Ensifer meliloti).